A 253-amino-acid chain; its full sequence is uncharacterized protein (253 aa).

S-adenosyl-L-methionine contacts are provided by residues Gly-45, 66-67, 94-95, and Arg-110; these read DA and AE.

Belongs to the methyltransferase superfamily.

This is an uncharacterized protein from Bacillus subtilis (strain 168).